The chain runs to 882 residues: Alanine--tRNA ligase (882 aa).

Zn(2+)-binding residues include histidine 574, histidine 578, cysteine 682, and histidine 686. Residues 853 to 882 (GGRGGGKGALAQGGGLDPRKAREALPGLLP) are disordered. Positions 854–868 (GRGGGKGALAQGGGL) are enriched in gly residues.

This sequence belongs to the class-II aminoacyl-tRNA synthetase family. Zn(2+) is required as a cofactor.

It localises to the cytoplasm. It catalyses the reaction tRNA(Ala) + L-alanine + ATP = L-alanyl-tRNA(Ala) + AMP + diphosphate. Its function is as follows. Catalyzes the attachment of alanine to tRNA(Ala) in a two-step reaction: alanine is first activated by ATP to form Ala-AMP and then transferred to the acceptor end of tRNA(Ala). Also edits incorrectly charged Ser-tRNA(Ala) and Gly-tRNA(Ala) via its editing domain. In Thermus thermophilus (strain ATCC BAA-163 / DSM 7039 / HB27), this protein is Alanine--tRNA ligase.